Consider the following 351-residue polypeptide: Phosphoribosylformylglycinamidine cyclo-ligase (351 aa).

Belongs to the AIR synthase family.

Its subcellular location is the cytoplasm. The catalysed reaction is 2-formamido-N(1)-(5-O-phospho-beta-D-ribosyl)acetamidine + ATP = 5-amino-1-(5-phospho-beta-D-ribosyl)imidazole + ADP + phosphate + H(+). Its pathway is purine metabolism; IMP biosynthesis via de novo pathway; 5-amino-1-(5-phospho-D-ribosyl)imidazole from N(2)-formyl-N(1)-(5-phospho-D-ribosyl)glycinamide: step 2/2. This is Phosphoribosylformylglycinamidine cyclo-ligase from Lysinibacillus sphaericus (strain C3-41).